We begin with the raw amino-acid sequence, 347 residues long: UDP-N-acetylenolpyruvoylglucosamine reductase (347 aa).

Residues 23-197 (LPARAARLLR…LRVRFRLPQA (175 aa)) enclose the FAD-binding PCMH-type domain. Arg174 is an active-site residue. The active-site Proton donor is the Ser247. The active site involves Glu343.

This sequence belongs to the MurB family. It depends on FAD as a cofactor.

It is found in the cytoplasm. It catalyses the reaction UDP-N-acetyl-alpha-D-muramate + NADP(+) = UDP-N-acetyl-3-O-(1-carboxyvinyl)-alpha-D-glucosamine + NADPH + H(+). The protein operates within cell wall biogenesis; peptidoglycan biosynthesis. Functionally, cell wall formation. The chain is UDP-N-acetylenolpyruvoylglucosamine reductase from Azoarcus sp. (strain BH72).